The chain runs to 274 residues: Hydroxyethylthiazole kinase (274 aa).

Met51 lines the substrate pocket. ATP contacts are provided by Arg127 and Ser173. Gly200 provides a ligand contact to substrate.

It belongs to the Thz kinase family. Mg(2+) serves as cofactor.

It carries out the reaction 5-(2-hydroxyethyl)-4-methylthiazole + ATP = 4-methyl-5-(2-phosphooxyethyl)-thiazole + ADP + H(+). Its pathway is cofactor biosynthesis; thiamine diphosphate biosynthesis; 4-methyl-5-(2-phosphoethyl)-thiazole from 5-(2-hydroxyethyl)-4-methylthiazole: step 1/1. In terms of biological role, catalyzes the phosphorylation of the hydroxyl group of 4-methyl-5-beta-hydroxyethylthiazole (THZ). This chain is Hydroxyethylthiazole kinase, found in Photobacterium profundum (strain SS9).